The sequence spans 640 residues: MPIITLPDGSQRSFDHPVSVAEVAQSIGAGLAKATLAGKVDGRLVDACDTIDRDATLQIITPKDEEGLEIIRHSCAHLVGHAVKQLYPTAKMVIGPVIEEGFYYDIFFERPFTPEDMAAIQQRMRELIDKDYDVIKKMTPRAEVIELFKSRGEDYKLRLIDDMPDEKAMGLYFHEEYVDMCRGPHVPNTRFLKAFQLTKISGAYWRGDSKNEQLQRIYGTAWADKKQLAAYIQRIEEAEKRDHRRIGKQLDLFHLQEEAPGMVFWHPNGWSVYQVLEQYMRKVQRDHGYVEVRTPQVVDRILWERSGHWSNYAENMFTTSSESRDYAVKPMNCPCHVQIFNQGLKSYRDLPLRLAEFGACHRNEPSGALHGIMRVRGFTQDDAHIFCTEEQVKKEAADFIKLTLQVYRDFGFTDIAMKLSTRPAKRVGSDELWDRAEGALADALNESGLAWEYQPGEGAFYGPKIEFTLKDCLGRNWQCGTLQYDPNLPERLDASYIAEDNNRKRPVMLHRAILGSFERFIGMLIEHYAGAFPAWLAPTQAVVMNITDKQADFAAEVVRILGESGFRAKSDLRNEKIGFKIREHTLLKVPYLLVIGDREVESKAVAVRTREGEDLGSMPVTQFAELLAQAVSRRGRQDSE.

The TGS domain maps to 1–61 (MPIITLPDGS…DRDATLQIIT (61 aa)). A catalytic region spans residues 242 to 533 (DHRRIGKQLD…LIEHYAGAFP (292 aa)). Zn(2+) is bound by residues cysteine 333, histidine 384, and histidine 510.

It belongs to the class-II aminoacyl-tRNA synthetase family. In terms of assembly, homodimer. The cofactor is Zn(2+).

The protein localises to the cytoplasm. The enzyme catalyses tRNA(Thr) + L-threonine + ATP = L-threonyl-tRNA(Thr) + AMP + diphosphate + H(+). Functionally, catalyzes the attachment of threonine to tRNA(Thr) in a two-step reaction: L-threonine is first activated by ATP to form Thr-AMP and then transferred to the acceptor end of tRNA(Thr). Also edits incorrectly charged L-seryl-tRNA(Thr). The chain is Threonine--tRNA ligase from Pseudomonas aeruginosa (strain LESB58).